An 877-amino-acid polypeptide reads, in one-letter code: Kinetochore null protein 2 (877 aa).

Residues 20 to 107 (IRLNLWSMKF…SNGIPENWAD (88 aa)) form the SANTA domain. Disordered regions lie at residues 122 to 315 (RPIQ…SKSV), 338 to 535 (FEST…ESLN), and 549 to 604 (MMFG…NDSI). The stretch at 153 to 211 (QKNSENEKERNRREREEQQTKERERRLEEEKQRRDAEAEAERRRKEEEELEEANYTLRA) forms a coiled coil. Residues 156–199 (SENEKERNRREREEQQTKERERRLEEEKQRRDAEAEAERRRKEE) show a composition bias toward basic and acidic residues. Residues 251–279 (IASSTPQQKQRLADGANNQIPPTQKSQDS) are compositionally biased toward polar residues. Basic and acidic residues-rich tracts occupy residues 359-385 (EPRHRSSSRDGYEQSRYSQRYEHDNSR), 394-444 (RRHE…RGRD), and 453-480 (VRFEEEHRRHGDEYRDPRGPRDYNDYGR). A coiled-coil region spans residues 491–549 (EDEEKLNAIVRREKELRNRLQKSQKASSSSYRHRSNSSDAEESLNEWDIENQELLDNSM). Low complexity predominate over residues 511–520 (QKSQKASSSS). Polar residues predominate over residues 573-583 (RSKPANSTKSP). The span at 592–601 (ASLEDNRDLN) shows a compositional bias: basic and acidic residues. Residues 617-678 (VAKKITWRKQ…AITRLKWVEP (62 aa)) form the Myb-like domain. Disordered stretches follow at residues 757-785 (RGGTRASIMPKPVEDSPMSRGNNSTFNSP) and 808-877 (MQAR…TSIY). Composition is skewed to polar residues over residues 775–785 (SRGNNSTFNSP) and 819–836 (SSSMNNSTYRGNKNTSIS). Residues 856–871 (EDDENEDNDDDDDMRE) are compositionally biased toward acidic residues.

Belongs to the KNL2 family. In terms of assembly, interacts with hcp-3.

The protein localises to the nucleus. The protein resides in the chromosome. It is found in the centromere. It localises to the kinetochore. Required for the recruitment of hcp-3, hcp-4, knl-1, bub-1 and lin-53 to kinetochores, kinetochore assembly, chromosome condensation and chromosome segregation in meiosis and mitosis. The chain is Kinetochore null protein 2 from Caenorhabditis elegans.